The primary structure comprises 348 residues: Sensor protein VraS (348 aa).

Helical transmembrane passes span 13-33 (ILVY…VNII) and 43-63 (IFGI…CIIV). The Histidine kinase domain occupies 150–341 (RLARELHDSV…RIEVKAPLNK (192 aa)).

It is found in the cell membrane. It catalyses the reaction ATP + protein L-histidine = ADP + protein N-phospho-L-histidine.. Functionally, member of the two-component regulatory system VraS/VraR involved in the control of the cell wall peptidoglycan biosynthesis. Probably activates VraR by phosphorylation. This chain is Sensor protein VraS (vraS), found in Staphylococcus epidermidis (strain ATCC 35984 / DSM 28319 / BCRC 17069 / CCUG 31568 / BM 3577 / RP62A).